We begin with the raw amino-acid sequence, 1183 residues long: Translation initiation factor IF-2 (1183 aa).

Disordered regions lie at residues 55-512 (KSKT…KVHI) and 538-574 (ASLA…RQRR). Positions 83–99 (TQKDQKTEPKKKNHDQT) are enriched in basic and acidic residues. Composition is skewed to polar residues over residues 100–143 (ELSQ…QITA) and 165–177 (KPLT…IPQS). Positions 220–229 (PKIDIQDKKP) are enriched in basic and acidic residues. Residues 231–252 (QPNNQKAKTRINQGEISPQKVG) show a composition bias toward polar residues. Positions 253–267 (QGNIQKIKSQNKQNQ) are enriched in low complexity. Residues 288 to 304 (IRREKPVNKPHTNEVRN) show a composition bias toward basic and acidic residues. 2 stretches are compositionally biased toward polar residues: residues 324–349 (QGLS…NRQG) and 357–367 (NRTTQGQNRPG). The span at 485–499 (GRPDWDDSAKLDALR) shows a compositional bias: basic and acidic residues. Composition is skewed to basic residues over residues 544 to 553 (SKPKVGKRNN) and 560 to 574 (LKKR…RQRR). One can recognise a tr-type G domain in the interval 675–847 (RRPPVVTVMG…VLLVTEVEDL (173 aa)). The segment at 684 to 691 (GHVDHGKT) is G1. 684–691 (GHVDHGKT) lines the GTP pocket. Positions 709–713 (GITQH) are G2. Residues 734 to 737 (DTPG) form a G3 region. GTP is bound by residues 734–738 (DTPGH) and 788–791 (NKID). The tract at residues 788–791 (NKID) is G4. Residues 824 to 826 (SAI) form a G5 region.

This sequence belongs to the TRAFAC class translation factor GTPase superfamily. Classic translation factor GTPase family. IF-2 subfamily.

The protein resides in the cytoplasm. In terms of biological role, one of the essential components for the initiation of protein synthesis. Protects formylmethionyl-tRNA from spontaneous hydrolysis and promotes its binding to the 30S ribosomal subunits. Also involved in the hydrolysis of GTP during the formation of the 70S ribosomal complex. The sequence is that of Translation initiation factor IF-2 from Prochlorococcus marinus (strain NATL1A).